The sequence spans 190 residues: Potassium-transporting ATPase KdpC subunit (190 aa).

A helical membrane pass occupies residues 11-31 (LIVLMSLITGVAYPLVVTGVA).

The protein belongs to the KdpC family. The system is composed of three essential subunits: KdpA, KdpB and KdpC.

The protein resides in the cell inner membrane. Part of the high-affinity ATP-driven potassium transport (or Kdp) system, which catalyzes the hydrolysis of ATP coupled with the electrogenic transport of potassium into the cytoplasm. This subunit acts as a catalytic chaperone that increases the ATP-binding affinity of the ATP-hydrolyzing subunit KdpB by the formation of a transient KdpB/KdpC/ATP ternary complex. The chain is Potassium-transporting ATPase KdpC subunit from Pseudomonas syringae pv. tomato (strain ATCC BAA-871 / DC3000).